The chain runs to 1415 residues: DNA-directed RNA polymerase subunit beta' (1415 aa).

Positions 71, 73, 86, and 89 each coordinate Zn(2+). The Mg(2+) site is built by aspartate 461, aspartate 463, and aspartate 465. The Zn(2+) site is built by cysteine 815, cysteine 889, cysteine 896, and cysteine 899.

This sequence belongs to the RNA polymerase beta' chain family. The RNAP catalytic core consists of 2 alpha, 1 beta, 1 beta' and 1 omega subunit. When a sigma factor is associated with the core the holoenzyme is formed, which can initiate transcription. Mg(2+) serves as cofactor. Requires Zn(2+) as cofactor.

It carries out the reaction RNA(n) + a ribonucleoside 5'-triphosphate = RNA(n+1) + diphosphate. In terms of biological role, DNA-dependent RNA polymerase catalyzes the transcription of DNA into RNA using the four ribonucleoside triphosphates as substrates. This chain is DNA-directed RNA polymerase subunit beta', found in Haemophilus influenzae (strain ATCC 51907 / DSM 11121 / KW20 / Rd).